Here is a 918-residue protein sequence, read N- to C-terminus: Rap guanine nucleotide exchange factor 3 (918 aa).

Residue serine 79 is modified to Phosphoserine. In terms of domain architecture, DEP spans 110 to 186 (ATYPTLIRDR…RDAQFYRFPG (77 aa)). Residues 218–242 (TVALRKPPGQRTDEELDLIFEELLH) are interaction with PDE3B. 3',5'-cyclic AMP is bound by residues 311–314 (GQLA) and 321–322 (RA). Residues 369–388 (TSQGAGPSRPPTPGRNRYTV) are disordered. The region spanning 384–521 (NRYTVMSGTP…EQYPERRRHH (138 aa)) is the N-terminal Ras-GEF domain. The segment at 398–422 (ELLLEAMRPDSSAHDPTETFLSDFL) is interaction with PDE3B. Phosphoserine is present on residues serine 531 and serine 859. The region spanning 665 to 884 (SAKDLAGQLT…SRISTCSEQS (220 aa)) is the Ras-GEF domain.

In terms of assembly, interacts with PDE3B and PIK3R6; form a signaling complex that regulates phosphatidylinositol 3-kinase gamma in angiogenesis.

The protein localises to the cytoplasm. It is found in the membrane. Guanine nucleotide exchange factor (GEF) for RAP1A and RAP2A small GTPases that is activated by binding cAMP. Through simultaneous binding of PDE3B to RAPGEF3 and PIK3R6 is assembled in a signaling complex in which it activates the PI3K gamma complex and which is involved in angiogenesis. Plays a role in the modulation of the cAMP-induced dynamic control of endothelial barrier function through a pathway that is independent on Rho-mediated signaling. Required for the actin rearrangement at cell-cell junctions, such as stress fibers and junctional actin. The protein is Rap guanine nucleotide exchange factor 3 (Rapgef3) of Mus musculus (Mouse).